The chain runs to 209 residues: Large ribosomal subunit protein uL3 (209 aa).

The interval 119 to 145 (AIKRHGQSRGPMSHGSHFHRAPGSVGM) is disordered.

The protein belongs to the universal ribosomal protein uL3 family. In terms of assembly, part of the 50S ribosomal subunit. Forms a cluster with proteins L14 and L19.

One of the primary rRNA binding proteins, it binds directly near the 3'-end of the 23S rRNA, where it nucleates assembly of the 50S subunit. In Staphylococcus aureus (strain COL), this protein is Large ribosomal subunit protein uL3.